Here is a 57-residue protein sequence, read N- to C-terminus: Small ribosomal subunit protein eS27 (57 aa).

Positions 10, 13, 29, and 32 each coordinate Zn(2+). Residues 10 to 32 (CDDCENEQVLFGKAANTVNCAVC) form a C4-type zinc finger.

It belongs to the eukaryotic ribosomal protein eS27 family. As to quaternary structure, part of the 30S ribosomal subunit. Zn(2+) serves as cofactor.

The polypeptide is Small ribosomal subunit protein eS27 (Natronomonas pharaonis (strain ATCC 35678 / DSM 2160 / CIP 103997 / JCM 8858 / NBRC 14720 / NCIMB 2260 / Gabara) (Halobacterium pharaonis)).